Here is a 338-residue protein sequence, read N- to C-terminus: MAQCVQTTTILEQKEEKTVTLLVPQAGKRKFEIVYFNIITFAYWHIAGLYGLYLCFTSTKWATVLFSFFLFVVAEVGVTAGSHRLWSHKTYKAKLPLQILLMVMNSLAFQNTVIDWVRDHRLHHKYSDTDADPHNASRGFFYSHVGWLLVRKHPDVKKRGKEIDISDIYNNPVLRFQKKYAIPFIGAVCFVLPTLIPVYGWGETWTNAWHVAMLRYIMNLNVTFLVNSAAHIYGKRPYDKKILPSQNIAVSIATFGEGFHNYHHVFPWDYRAAELGNNSLNFPTKFIDFFAWIGWAYDLKTVSKEMIKQRSKRTGDGTNLWGLEDVDTPEDLKNTKGE.

A run of 2 helical transmembrane segments spans residues 33-53 (IVYF…YGLY) and 61-81 (WATV…VTAG). Positions 83–88 (HRLWSH) match the Histidine box-1 motif. Residues 97-117 (LQILLMVMNSLAFQNTVIDWV) form a helical membrane-spanning segment. The Histidine box-2 signature appears at 120–124 (HRLHH). Transmembrane regions (helical) follow at residues 181-201 (AIPF…VYGW) and 212-234 (AMLR…HIYG). The Histidine box-3 signature appears at 260–264 (HNYHH). Positions 318-338 (TNLWGLEDVDTPEDLKNTKGE) are disordered.

Belongs to the fatty acid desaturase type 1 family. Fe cation is required as a cofactor. As to expression, detected in the pheromone gland.

Its subcellular location is the membrane. The catalysed reaction is an 11,12-saturated fatty acyl-CoA + 2 Fe(II)-[cytochrome b5] + O2 + 2 H(+) = an (11Z)-Delta(11)-fatty acyl-CoA + 2 Fe(III)-[cytochrome b5] + 2 H2O. Catalyzes the formation of delta(11) fatty acyl precursors in the pheromone gland, and has high activity towards palmitic acid and stearic acid. The polypeptide is Acyl-CoA Delta(11) desaturase (Spodoptera littoralis (Egyptian cotton leafworm)).